A 361-amino-acid chain; its full sequence is Eukaryotic translation initiation factor 3 subunit F (361 aa).

A disordered region spans residues 1-86 (MATPAVPVSA…PAPALPGPAL (86 aa)). Position 2 is an N-acetylalanine (A2). 2 stretches are compositionally biased toward pro residues: residues 9-20 (SAPPATPAPVPA) and 30-40 (VPAPTPAPAAA). Low complexity predominate over residues 41–78 (PVPAAAPASSSDPAAAAATTAAPGQTPASAQAPAQTPA). S50 carries the post-translational modification Phosphoserine; by CDK11; in vitro. One can recognise an MPN domain in the interval 96-226 (VRLHPVILAS…IKAYVSTLMG (131 aa)). Residue K242 is modified to N6-acetyllysine. S262 is modified (phosphoserine).

It belongs to the eIF-3 subunit F family. As to quaternary structure, component of the eukaryotic translation initiation factor 3 (eIF-3) complex, which is composed of 13 subunits: EIF3A, EIF3B, EIF3C, EIF3D, EIF3E, EIF3F, EIF3G, EIF3H, EIF3I, EIF3J, EIF3K, EIF3L and EIF3M. The eIF-3 complex appears to include 3 stable modules: module A is composed of EIF3A, EIF3B, EIF3G and EIF3I; module B is composed of EIF3F, EIF3H, and EIF3M; and module C is composed of EIF3C, EIF3D, EIF3E, EIF3K and EIF3L. EIF3C of module C binds EIF3B of module A and EIF3H of module B, thereby linking the three modules. EIF3J is a labile subunit that binds to the eIF-3 complex via EIF3B. The eIF-3 complex interacts with RPS6KB1 under conditions of nutrient depletion. Mitogenic stimulation leads to binding and activation of a complex composed of MTOR and RPTOR, leading to phosphorylation and release of RPS6KB1 and binding of EIF4B to eIF-3. Interacts with RNF139; the interaction leads to protein translation inhibitions in a ubiquitination-dependent manner. Interacts with DTX1, the interaction is required for deubiquitinating activity towards NOTCH1. In terms of processing, phosphorylation is enhanced upon serum stimulation. Phosphorylated during apoptosis by caspase-processed CDK11.

It localises to the cytoplasm. The catalysed reaction is Thiol-dependent hydrolysis of ester, thioester, amide, peptide and isopeptide bonds formed by the C-terminal Gly of ubiquitin (a 76-residue protein attached to proteins as an intracellular targeting signal).. In terms of biological role, component of the eukaryotic translation initiation factor 3 (eIF-3) complex, which is required for several steps in the initiation of protein synthesis. The eIF-3 complex associates with the 40S ribosome and facilitates the recruitment of eIF-1, eIF-1A, eIF-2:GTP:methionyl-tRNAi and eIF-5 to form the 43S pre-initiation complex (43S PIC). The eIF-3 complex stimulates mRNA recruitment to the 43S PIC and scanning of the mRNA for AUG recognition. The eIF-3 complex is also required for disassembly and recycling of post-termination ribosomal complexes and subsequently prevents premature joining of the 40S and 60S ribosomal subunits prior to initiation. The eIF-3 complex specifically targets and initiates translation of a subset of mRNAs involved in cell proliferation, including cell cycling, differentiation and apoptosis, and uses different modes of RNA stem-loop binding to exert either translational activation or repression. Deubiquitinates activated NOTCH1, promoting its nuclear import, thereby acting as a positive regulator of Notch signaling. This is Eukaryotic translation initiation factor 3 subunit F from Pan troglodytes (Chimpanzee).